We begin with the raw amino-acid sequence, 127 residues long: Acetylcholine receptor subunit alpha (127 aa).

The Extracellular segment spans residues 1–127 (ADGIFAIDQF…YFIVNVIIPC (127 aa)). Residues cysteine 33 and cysteine 47 are joined by a disulfide bond. Residues asparagine 46 and asparagine 94 are each glycosylated (N-linked (GlcNAc...) asparagine). Cysteine 97 and cysteine 98 are disulfide-bonded.

Belongs to the ligand-gated ion channel (TC 1.A.9) family. Acetylcholine receptor (TC 1.A.9.1) subfamily. Alpha-1/CHRNA1 sub-subfamily. One of the alpha chains that assemble within the acetylcholine receptor, a pentamer of two alpha chains, a beta, a delta, and a gamma or epsilon chains.

The protein resides in the postsynaptic cell membrane. It localises to the cell membrane. The enzyme catalyses K(+)(in) = K(+)(out). It catalyses the reaction Na(+)(in) = Na(+)(out). Its function is as follows. Upon acetylcholine binding, the AChR responds by an extensive change in conformation that affects all subunits and leads to opening of an ion-conducting channel across the plasma membrane. Does not bind alpha-bungarotoxin. The polypeptide is Acetylcholine receptor subunit alpha (CHRNA1) (Natrix tessellata (Dice snake)).